The primary structure comprises 356 residues: Phosphate acyltransferase (356 aa).

Belongs to the PlsX family. Homodimer. Probably interacts with PlsY.

The protein localises to the cytoplasm. The catalysed reaction is a fatty acyl-[ACP] + phosphate = an acyl phosphate + holo-[ACP]. It functions in the pathway lipid metabolism; phospholipid metabolism. Functionally, catalyzes the reversible formation of acyl-phosphate (acyl-PO(4)) from acyl-[acyl-carrier-protein] (acyl-ACP). This enzyme utilizes acyl-ACP as fatty acyl donor, but not acyl-CoA. In Stutzerimonas stutzeri (strain A1501) (Pseudomonas stutzeri), this protein is Phosphate acyltransferase.